The sequence spans 103 residues: MTDLKITLVNEDGESTISGKGHPLPAPLIFPPIYCFCFIQYKTEGKLWDKNDFQIKSGKIEFGGEEYDITESKGTWSKDDEENHIKVSLHLIVPPKKIFQKNF.

It belongs to the csb family. O-glycosylated.

The protein localises to the cell surface. Its function is as follows. Cell-cell adhesion during early development. In Dictyostelium discoideum (Social amoeba), this protein is Glycoprotein 24B (csbB).